We begin with the raw amino-acid sequence, 309 residues long: Neuropeptide-like 1 (309 aa).

The N-terminal stretch at 1–28 (MQAVLQSAHSSRRLMLLLSMLLNAAIQP) is a signal peptide. A propeptide spanning residues 29 to 99 (RSIIVSATDD…GEYPDYLEED (71 aa)) is cleaved from the precursor. The disordered stretch occupies residues 126 to 147 (GQLPTAEPGEDYGDADSGEPSE). Over residues 133-144 (PGEDYGDADSGE) the composition is skewed to acidic residues. Tyr164 carries the post-translational modification Tyrosine amide. Asparagine amide is present on Asn182.

MTYamide peptide: Expressed in the larval CNS (at protein level). NAP peptide: Expressed in the larval CNS (at protein level). IPNamide peptide: Expressed in the ventral ganglion of the third larval instar and adult brain (at protein level).

The protein localises to the secreted. Functionally, acts as a ligand for the receptor-type guanylate cyclase Gyc76C. Stimulates Gyc76c-dependent cGMP production and modulates the IMD innate immune pathway in response to salt stress by inducing nuclear translocation of NF-kappa-B protein Rel which leads to increased expression of the antimicrobial peptide diptericin. Does not appear to play a role in Gyc76C-mediated wing development. The chain is Neuropeptide-like 1 (Nplp1) from Drosophila melanogaster (Fruit fly).